The following is a 205-amino-acid chain: Recombination protein RecR (205 aa).

A C4-type zinc finger spans residues C64–C79. A Toprim domain is found at R87 to P182.

The protein belongs to the RecR family.

May play a role in DNA repair. It seems to be involved in an RecBC-independent recombinational process of DNA repair. It may act with RecF and RecO. The protein is Recombination protein RecR of Roseiflexus sp. (strain RS-1).